Here is a 429-residue protein sequence, read N- to C-terminus: Glucose-6-phosphate isomerase (429 aa).

Catalysis depends on Glu282, which acts as the Proton donor. Catalysis depends on residues His303 and Lys418.

Belongs to the GPI family.

It localises to the cytoplasm. The catalysed reaction is alpha-D-glucose 6-phosphate = beta-D-fructose 6-phosphate. The protein operates within carbohydrate biosynthesis; gluconeogenesis. It functions in the pathway carbohydrate degradation; glycolysis; D-glyceraldehyde 3-phosphate and glycerone phosphate from D-glucose: step 2/4. Catalyzes the reversible isomerization of glucose-6-phosphate to fructose-6-phosphate. The chain is Glucose-6-phosphate isomerase from Mesomycoplasma hyopneumoniae (strain J / ATCC 25934 / NCTC 10110) (Mycoplasma hyopneumoniae).